The following is a 265-amino-acid chain: MLDLHQIIVSIIIGVIEGITEFLPISSTGHMIIASHWLKIDNENTKILEIFIEFGSALSILYFFHKKILRILKFNINVKKTNTKNLHIILAILPTIFFGLLFYKKIKLLFNTYNVMYALILGGIFLLISEIFKPKKYKTCSINDISLLQSAIIGFFQIFCLYPGFSRSGATIGTAILLGIKRSVAIEFSFIISIPLIMGASFYDFINNMHNFKILDLPIFFIGFMISFIVSILCIKKLLKIINRTSLIFFGIYRFIISGLIYFIN.

8 helical membrane-spanning segments follow: residues 7–27 (IIVS…PISS), 45–65 (TKIL…YFFH), 86–106 (LHII…YKKI), 108–128 (LLFN…FLLI), 145–165 (ISLL…YPGF), 186–206 (IEFS…YDFI), 214–234 (ILDL…SILC), and 245–265 (TSLI…YFIN).

The protein belongs to the UppP family.

It is found in the cell membrane. The catalysed reaction is di-trans,octa-cis-undecaprenyl diphosphate + H2O = di-trans,octa-cis-undecaprenyl phosphate + phosphate + H(+). Catalyzes the dephosphorylation of undecaprenyl diphosphate (UPP). Confers resistance to bacitracin. The polypeptide is Undecaprenyl-diphosphatase (Buchnera aphidicola subsp. Acyrthosiphon pisum (strain Tuc7)).